A 419-amino-acid chain; its full sequence is MSLESYMNQIGQQARAASRLLAKASTKQKNMALFAMAEALENARPRLVEENAKDMENGRAKGLDSALLDRLLLDDKRIDGMIEGLKQVASLPDPIGEISDMVYLPSGIQRGQMRVPLGVIGIIYESRPNVTIDAASLCLKSGNATILRGGSEAFYSNQAIAEAVTAGVVAAGLPEHAVQVLNTTDREAVGKLISMPEFVDVIVPRGGKGLIERISKDARVPVIKHLDGNCHVYIDDEADLDKAFAIAMNAKTRRYGVCNAMESLLVHASVAGDILPKLVFALQEKGVSLVGCDQVRSVSGEIGAATEEDWYTEYLAPKLSIKIVANMDEAIAHINKYGSHHTDAIVSQNYTKARAFMTEVDSSSVMVNASTSFADGFEYGFGAEIGISTDKIHARGPVGLLGLTSQKYVVLGDGHTRDN.

Belongs to the gamma-glutamyl phosphate reductase family.

The protein localises to the cytoplasm. The enzyme catalyses L-glutamate 5-semialdehyde + phosphate + NADP(+) = L-glutamyl 5-phosphate + NADPH + H(+). Its pathway is amino-acid biosynthesis; L-proline biosynthesis; L-glutamate 5-semialdehyde from L-glutamate: step 2/2. Its function is as follows. Catalyzes the NADPH-dependent reduction of L-glutamate 5-phosphate into L-glutamate 5-semialdehyde and phosphate. The product spontaneously undergoes cyclization to form 1-pyrroline-5-carboxylate. The sequence is that of Gamma-glutamyl phosphate reductase from Marinomonas sp. (strain MWYL1).